The chain runs to 361 residues: Sensor protein VanSC (361 aa).

Helical transmembrane passes span 16 to 36 (FVTTGILLAFLVMIPLVIRFI) and 59 to 79 (WLFCVAIGALLIWFGTTIYYM). The region spanning 144–359 (YLAHDLRTPL…IFNVRLPKPA (216 aa)) is the Histidine kinase domain. At His147 the chain carries Phosphohistidine; by autocatalysis. A Mg(2+)-binding site is contributed by Glu252.

In terms of processing, autophosphorylated.

The protein resides in the membrane. The enzyme catalyses ATP + protein L-histidine = ADP + protein N-phospho-L-histidine.. The polypeptide is Sensor protein VanSC (Enterococcus gallinarum).